The sequence spans 97 residues: Aspartyl/glutamyl-tRNA(Asn/Gln) amidotransferase subunit C (97 aa).

The interval 59 to 78 (STGKLRPDEPAQPLSRDDAL) is disordered. The span at 63-78 (LRPDEPAQPLSRDDAL) shows a compositional bias: basic and acidic residues.

This sequence belongs to the GatC family. As to quaternary structure, heterotrimer of A, B and C subunits.

The enzyme catalyses L-glutamyl-tRNA(Gln) + L-glutamine + ATP + H2O = L-glutaminyl-tRNA(Gln) + L-glutamate + ADP + phosphate + H(+). It carries out the reaction L-aspartyl-tRNA(Asn) + L-glutamine + ATP + H2O = L-asparaginyl-tRNA(Asn) + L-glutamate + ADP + phosphate + 2 H(+). Its function is as follows. Allows the formation of correctly charged Asn-tRNA(Asn) or Gln-tRNA(Gln) through the transamidation of misacylated Asp-tRNA(Asn) or Glu-tRNA(Gln) in organisms which lack either or both of asparaginyl-tRNA or glutaminyl-tRNA synthetases. The reaction takes place in the presence of glutamine and ATP through an activated phospho-Asp-tRNA(Asn) or phospho-Glu-tRNA(Gln). This Metallosphaera sedula (strain ATCC 51363 / DSM 5348 / JCM 9185 / NBRC 15509 / TH2) protein is Aspartyl/glutamyl-tRNA(Asn/Gln) amidotransferase subunit C.